The primary structure comprises 209 residues: Homeobox protein ceh-2 (209 aa).

Basic and acidic residues predominate over residues 1 to 14; the sequence is MTLKFSVERLVDSE. Disordered stretches follow at residues 1–46 and 181–209; these read MTLK…KSGK and HKRV…KSVS. Acidic residues predominate over residues 15 to 24; that stretch reads KESEEADVEE. Positions 126-185 form a DNA-binding region, homeobox; sequence NKRIRTAFSASQLIQLEKAFEGNHYVVGNERKQLAAKLSLTETQVKVWFQNRRTKHKRVR.

It belongs to the EMX homeobox family. In terms of tissue distribution, in the anterior pharynx, expressed in the I3 interneuron, the NSM and M3 motor neuron pairs, the three m2 muscle cells and the three e2 epithelial cells (at protein level).

Its subcellular location is the nucleus. Required for activity of the M3 pharyngeal motor neuron. The chain is Homeobox protein ceh-2 from Caenorhabditis elegans.